Consider the following 337-residue polypeptide: Outer membrane protein assembly factor BamC (337 aa).

The N-terminal stretch at 1–16 is a signal peptide; that stretch reads MKKWLFPFAFVATLAG. The N-palmitoyl cysteine moiety is linked to residue cysteine 17. The S-diacylglycerol cysteine moiety is linked to residue cysteine 17.

The protein belongs to the BamC family. In terms of assembly, part of the Bam complex.

The protein resides in the cell outer membrane. Part of the outer membrane protein assembly complex, which is involved in assembly and insertion of beta-barrel proteins into the outer membrane. This chain is Outer membrane protein assembly factor BamC, found in Pasteurella multocida (strain Pm70).